We begin with the raw amino-acid sequence, 202 residues long: MPPRPRFDRRAPVRELPNINDRIKYPQLRVVDADGTQLGVINREAALEVAQERELDLVLVSEKANPPVCRIMNYGKFKFEQEKKAKEAKKKSHQTEVKEVKMRYKIDQHDYEVRINQATRFLKAGDKVKCTVIFRGREIQHTNLAESLLARMAKDLEEQAEVQQTPKREGRNMIMFLTPRKTPLIKNEKEVTTSAKAERTIS.

The protein belongs to the IF-3 family. Monomer.

It localises to the cytoplasm. IF-3 binds to the 30S ribosomal subunit and shifts the equilibrium between 70S ribosomes and their 50S and 30S subunits in favor of the free subunits, thus enhancing the availability of 30S subunits on which protein synthesis initiation begins. The sequence is that of Translation initiation factor IF-3 from Prochlorococcus marinus (strain MIT 9211).